We begin with the raw amino-acid sequence, 702 residues long: Phosphoglycerol transferase I (702 aa).

3 helical membrane-spanning segments follow: residues 2-22 (HWILALSLLLLLWLLVASPRL), 71-91 (FSGYIAVFIGMVLLSLSPLML), and 103-123 (GGAVFGAFVVMLLVSMAVSPV).

This sequence belongs to the OpgB family.

The protein localises to the cell inner membrane. It carries out the reaction a phosphatidylglycerol + a membrane-derived-oligosaccharide D-glucose = a 1,2-diacyl-sn-glycerol + a membrane-derived-oligosaccharide 6-(glycerophospho)-D-glucose.. Its pathway is glycan metabolism; osmoregulated periplasmic glucan (OPG) biosynthesis. Its function is as follows. Transfers a phosphoglycerol residue from phosphatidylglycerol to the membrane-bound nascent glucan backbones. This is Phosphoglycerol transferase I from Xanthomonas campestris pv. campestris (strain B100).